Consider the following 393-residue polypeptide: Sialyltransferase-like protein 1 (393 aa).

Residues 1 to 8 lie on the Cytoplasmic side of the membrane; that stretch reads MKRPLRRP. The chain crosses the membrane as a helical; Signal-anchor for type II membrane protein span at residues 9 to 27; the sequence is FAVLLFVVLCAAASFPSVL. The Lumenal portion of the chain corresponds to 28–393; it reads RRSVGPAPVL…IAVPPVVFYH (366 aa). Residues asparagine 49, asparagine 212, and asparagine 258 are each glycosylated (N-linked (GlcNAc...) asparagine).

This sequence belongs to the glycosyltransferase 29 family. In terms of tissue distribution, expressed in leaves and stalks. Expressed at low levels in roots.

The protein resides in the golgi apparatus membrane. Its function is as follows. Possesses sialyltransferase-like activity in vitro. Transfers sialic acid to the oligosaccharide Gal-beta-1,3-GalNAc and to glycoproteins such as asialofetuin, alpha-1-acid glycoprotein (NeuAc-alpha-2,3-Gal-beta-1,3-GalNAc-) and andasialo-alpha-1-acid glycoprotein. The transferred sialic acid is linked to galactose of Gal-beta-1,3-GalNAc through alpha-2,6-linkage. In Oryza sativa subsp. japonica (Rice), this protein is Sialyltransferase-like protein 1.